Here is a 331-residue protein sequence, read N- to C-terminus: Holliday junction branch migration complex subunit RuvB (331 aa).

The large ATPase domain (RuvB-L) stretch occupies residues 1-171 (MTEPLDAALR…FGIIEHLEYY (171 aa)). ATP is bound by residues Leu-9, Arg-10, Gly-51, Lys-54, Thr-55, Thr-56, 118–120 (EDF), Arg-161, Tyr-171, and Arg-208. Thr-55 contributes to the Mg(2+) binding site. The small ATPAse domain (RuvB-S) stretch occupies residues 172-242 (TPEEIGTNLL…RAQDALDKLG (71 aa)). A head domain (RuvB-H) region spans residues 245-331 (TAGLDERDKK…AESDLGLYTN (87 aa)). The DNA site is built by Arg-300 and Arg-305.

The protein belongs to the RuvB family. As to quaternary structure, homohexamer. Forms an RuvA(8)-RuvB(12)-Holliday junction (HJ) complex. HJ DNA is sandwiched between 2 RuvA tetramers; dsDNA enters through RuvA and exits via RuvB. An RuvB hexamer assembles on each DNA strand where it exits the tetramer. Each RuvB hexamer is contacted by two RuvA subunits (via domain III) on 2 adjacent RuvB subunits; this complex drives branch migration. In the full resolvosome a probable DNA-RuvA(4)-RuvB(12)-RuvC(2) complex forms which resolves the HJ.

It is found in the cytoplasm. The catalysed reaction is ATP + H2O = ADP + phosphate + H(+). The RuvA-RuvB-RuvC complex processes Holliday junction (HJ) DNA during genetic recombination and DNA repair, while the RuvA-RuvB complex plays an important role in the rescue of blocked DNA replication forks via replication fork reversal (RFR). RuvA specifically binds to HJ cruciform DNA, conferring on it an open structure. The RuvB hexamer acts as an ATP-dependent pump, pulling dsDNA into and through the RuvAB complex. RuvB forms 2 homohexamers on either side of HJ DNA bound by 1 or 2 RuvA tetramers; 4 subunits per hexamer contact DNA at a time. Coordinated motions by a converter formed by DNA-disengaged RuvB subunits stimulates ATP hydrolysis and nucleotide exchange. Immobilization of the converter enables RuvB to convert the ATP-contained energy into a lever motion, pulling 2 nucleotides of DNA out of the RuvA tetramer per ATP hydrolyzed, thus driving DNA branch migration. The RuvB motors rotate together with the DNA substrate, which together with the progressing nucleotide cycle form the mechanistic basis for DNA recombination by continuous HJ branch migration. Branch migration allows RuvC to scan DNA until it finds its consensus sequence, where it cleaves and resolves cruciform DNA. In Deinococcus geothermalis (strain DSM 11300 / CIP 105573 / AG-3a), this protein is Holliday junction branch migration complex subunit RuvB.